The chain runs to 480 residues: Glycogen synthase (480 aa).

Lys15 serves as a coordination point for ADP-alpha-D-glucose.

Belongs to the glycosyltransferase 1 family. Bacterial/plant glycogen synthase subfamily.

It carries out the reaction [(1-&gt;4)-alpha-D-glucosyl](n) + ADP-alpha-D-glucose = [(1-&gt;4)-alpha-D-glucosyl](n+1) + ADP + H(+). It functions in the pathway glycan biosynthesis; glycogen biosynthesis. Functionally, synthesizes alpha-1,4-glucan chains using ADP-glucose. The polypeptide is Glycogen synthase (Rhizobium rhizogenes (strain K84 / ATCC BAA-868) (Agrobacterium radiobacter)).